The following is a 699-amino-acid chain: Elongation factor G (699 aa).

A tr-type G domain is found at 8–288 (EDYRNFGIMA…AVVDYLPSPL (281 aa)). GTP is bound by residues 17–24 (AHIDAGKT), 86–90 (DTPGH), and 140–143 (NKMD).

It belongs to the TRAFAC class translation factor GTPase superfamily. Classic translation factor GTPase family. EF-G/EF-2 subfamily.

It localises to the cytoplasm. In terms of biological role, catalyzes the GTP-dependent ribosomal translocation step during translation elongation. During this step, the ribosome changes from the pre-translocational (PRE) to the post-translocational (POST) state as the newly formed A-site-bound peptidyl-tRNA and P-site-bound deacylated tRNA move to the P and E sites, respectively. Catalyzes the coordinated movement of the two tRNA molecules, the mRNA and conformational changes in the ribosome. The sequence is that of Elongation factor G from Rhizobium etli (strain CIAT 652).